Reading from the N-terminus, the 717-residue chain is Delta-1-pyrroline-5-carboxylate synthase (717 aa).

Residues 1 to 296 (MDAVDSTRAF…WAPVGDVGAR (296 aa)) form a glutamate 5-kinase region. Substrate is bound by residues serine 60, aspartate 157, and asparagine 176. ATP-binding positions include 196-197 (SD) and 236-242 (RGGMTAK). The segment at 297 to 717 (DMAVAARESS…YTHKDLTSHA (421 aa)) is gamma-glutamyl phosphate reductase.

The protein in the N-terminal section; belongs to the glutamate 5-kinase family. It in the C-terminal section; belongs to the gamma-glutamyl phosphate reductase family. Expressed at high levels in leaves and is inducible in roots subjected to salt stress.

The catalysed reaction is L-glutamate + ATP = L-glutamyl 5-phosphate + ADP. It carries out the reaction L-glutamate 5-semialdehyde + phosphate + NADP(+) = L-glutamyl 5-phosphate + NADPH + H(+). Its pathway is amino-acid biosynthesis; L-proline biosynthesis; L-glutamate 5-semialdehyde from L-glutamate: step 1/2. It functions in the pathway amino-acid biosynthesis; L-proline biosynthesis; L-glutamate 5-semialdehyde from L-glutamate: step 2/2. Feedback regulated by proline. Its function is as follows. P5CS plays a key role in proline biosynthesis, leading to osmoregulation in plants. This Actinidia deliciosa (Kiwi) protein is Delta-1-pyrroline-5-carboxylate synthase.